The following is a 291-amino-acid chain: Kidney mitochondrial carrier protein 1 (291 aa).

N-acetylserine is present on S2. Solcar repeat units follow at residues 7–96 (KPFV…LKRL), 104–189 (ETLL…TKKH), and 198–289 (DTVA…LKKL). The next 6 helical transmembrane spans lie at 9-26 (FVYG…TFPI), 71-89 (GIAP…KIGT), 106-124 (LLVN…SAIA), 164-183 (GVSL…LPVY), 204-224 (FLSS…VDVV), and 264-283 (GFWP…FLTY).

This sequence belongs to the mitochondrial carrier (TC 2.A.29) family. Interacts with VDAC1. Present in kidney (at protein level). Expressed predominantly within the kidney cortex in the proximal and distal tubules and at lower levels in the testis and white adipose tissue.

The protein resides in the mitochondrion inner membrane. The enzyme catalyses sulfite(in) + sulfate(out) = sulfite(out) + sulfate(in). It catalyses the reaction thiosulfate(in) + sulfate(out) = thiosulfate(out) + sulfate(in). The catalysed reaction is sulfate(out) + phosphate(in) = sulfate(in) + phosphate(out). It carries out the reaction oxalate(in) + sulfate(out) = oxalate(out) + sulfate(in). The enzyme catalyses malonate(in) + sulfate(out) = malonate(out) + sulfate(in). It catalyses the reaction maleate(in) + sulfate(out) = maleate(out) + sulfate(in). The catalysed reaction is (S)-malate(in) + sulfate(out) = (S)-malate(out) + sulfate(in). It carries out the reaction (3S)-citramalate(in) + sulfate(out) = (3S)-citramalate(out) + sulfate(in). The enzyme catalyses (3R)-citramalate(in) + sulfate(out) = (3R)-citramalate(out) + sulfate(in). It catalyses the reaction sulfate(out) + succinate(in) = sulfate(in) + succinate(out). The catalysed reaction is (S,S)-tartrate(in) + sulfate(out) = (S,S)-tartrate(out) + sulfate(in). It carries out the reaction (2R,3R)-tartrate(in) + sulfate(out) = (2R,3R)-tartrate(out) + sulfate(in). The enzyme catalyses D-aspartate(in) + sulfate(out) = D-aspartate(out) + sulfate(in). It catalyses the reaction L-aspartate(in) + sulfate(out) = L-aspartate(out) + sulfate(in). The catalysed reaction is sulfate(in) = sulfate(out). It carries out the reaction phosphate(in) = phosphate(out). The enzyme catalyses (S)-malate(out) = (S)-malate(in). Its function is as follows. Antiporter that transports inorganic anions (sulfate, sulfite, thiosulfate and phosphate) and, to a lesser extent, a variety of dicarboxylates (e.g. malonate, malate and citramalate) and, even more so, aspartate. The sulfate/sulfate exchange is much higher than the phosphate/phosphate and malate/malate exchanges. The transport affinities is higher for sulfate and thiosulfate than for any other substrate. May catalyze the export of sulfite and thiosulfate (the hydrogen sulfide degradation products) from the mitochondria, thereby modulating the level of the hydrogen sulfide. Also may mediate a very low unidirectional transport of sulfate, phosphate and (S)-malate. The chain is Kidney mitochondrial carrier protein 1 from Mus musculus (Mouse).